Here is a 112-residue protein sequence, read N- to C-terminus: Large ribosomal subunit protein uL18 (112 aa).

Belongs to the universal ribosomal protein uL18 family. As to quaternary structure, part of the 50S ribosomal subunit; part of the 5S rRNA/L5/L18/L25 subcomplex. Contacts the 5S and 23S rRNAs.

Its function is as follows. This is one of the proteins that bind and probably mediate the attachment of the 5S RNA into the large ribosomal subunit, where it forms part of the central protuberance. This chain is Large ribosomal subunit protein uL18, found in Thermus thermophilus (strain ATCC BAA-163 / DSM 7039 / HB27).